The sequence spans 425 residues: NAC domain-containing protein 10 (425 aa).

Residues 1–10 (MESPDSSSGS) are compositionally biased toward polar residues. A disordered region spans residues 1-34 (MESPDSSSGSAPPRVLRRQQQQPGSAPELPPGFR). A compositionally biased stretch (low complexity) spans 12 to 23 (PPRVLRRQQQQP). Residues 29–200 (LPPGFRFHPT…DWVLCRIYKK (172 aa)) enclose the NAC domain. The DNA-binding element occupies 129 to 206 (VGVKKALVFY…IYKKTNKAGA (78 aa)).

In terms of tissue distribution, highest expression in stamens. Expressed in leaves.

It is found in the nucleus. Transcription factor of the NAC family associated with male fertility. Involved in anther development, but not in senescence. Reduced expression of NAC5 via RNAi leads to male-sterility. This Oryza sativa subsp. japonica (Rice) protein is NAC domain-containing protein 10.